The sequence spans 77 residues: Translational regulator CsrA (77 aa).

This sequence belongs to the CsrA/RsmA family. In terms of assembly, homodimer; the beta-strands of each monomer intercalate to form a hydrophobic core, while the alpha-helices form wings that extend away from the core.

The protein resides in the cytoplasm. Its function is as follows. A translational regulator that binds mRNA to regulate translation initiation and/or mRNA stability. Usually binds in the 5'-UTR at or near the Shine-Dalgarno sequence preventing ribosome-binding, thus repressing translation. Its main target seems to be the major flagellin gene, while its function is anatagonized by FliW. The sequence is that of Translational regulator CsrA from Pseudarthrobacter chlorophenolicus (strain ATCC 700700 / DSM 12829 / CIP 107037 / JCM 12360 / KCTC 9906 / NCIMB 13794 / A6) (Arthrobacter chlorophenolicus).